A 501-amino-acid chain; its full sequence is MCGIVGIVGKSNVNQALYDALTVLQHRGQDAAGIVTCHDDKLYLRKDNGLVRDVFQQRHMQRLIGSVGIGHVRYPTAGSSSSAEAQPFYVNSPYGITLAHNGNLTNVEQLAKEIYESDLRHVNTNSDSEVLLNVFAHELAVRNKLQPTEEDIFAAVSCVHDRCVGGYAVVAMITGHGIVGFRDPNAIRPIVFGQRHTENGVEYMIASESVALDVLGFTLIRDLAPGEAVYITEEGKLYTRQCAKAPKYAPCIFEHVYLARPDSIMDGISVYKARLRMGEKLADKILRERPDHDIDVVIPIPDTSRTAALELANRLGVKFREGFVKNRYIGRTFIMPGQAARKKSVRQKLNAIELEFRGKNVMLVDDSIVRGTTCKQIIQMAREAGAKNVYFCSAAPAVRYPNVYGIDMPSAHELIAHNRSTEDVSKLIGADWLVYQDLPDLIDAVGGGKIKIDHFDCAVFDGEYVTGDVNEAYLNRIEQARNDATKAKSQAVSAIIDLYND.

Catalysis depends on C2, which acts as the Nucleophile. Positions 2 to 234 (CGIVGIVGKS…PGEAVYITEE (233 aa)) constitute a Glutamine amidotransferase type-2 domain. Mg(2+) contacts are provided by T303, D365, and D366.

The protein in the C-terminal section; belongs to the purine/pyrimidine phosphoribosyltransferase family. The cofactor is Mg(2+).

The catalysed reaction is 5-phospho-beta-D-ribosylamine + L-glutamate + diphosphate = 5-phospho-alpha-D-ribose 1-diphosphate + L-glutamine + H2O. It participates in purine metabolism; IMP biosynthesis via de novo pathway; N(1)-(5-phospho-D-ribosyl)glycinamide from 5-phospho-alpha-D-ribose 1-diphosphate: step 1/2. In terms of biological role, catalyzes the formation of phosphoribosylamine from phosphoribosylpyrophosphate (PRPP) and glutamine. This chain is Amidophosphoribosyltransferase, found in Pseudomonas aeruginosa (strain ATCC 15692 / DSM 22644 / CIP 104116 / JCM 14847 / LMG 12228 / 1C / PRS 101 / PAO1).